The chain runs to 468 residues: Hydroxymethylglutaryl-CoA lyase, mitochondrial (468 aa).

Residues 168-435 (VKIVEVGPRD…HTNVDLGKLI (268 aa)) form the Pyruvate carboxyltransferase domain. Residue Arg-176 coordinates substrate. A divalent metal cation contacts are provided by Asp-177, His-368, and His-370. Residue Cys-401 is part of the active site. Residue Asn-410 participates in a divalent metal cation binding.

Belongs to the HMG-CoA lyase family. As to quaternary structure, homodimer. A divalent metal cation is required as a cofactor.

It is found in the mitochondrion matrix. It catalyses the reaction (3S)-3-hydroxy-3-methylglutaryl-CoA = acetoacetate + acetyl-CoA. It participates in metabolic intermediate metabolism; (S)-3-hydroxy-3-methylglutaryl-CoA degradation; acetoacetate from (S)-3-hydroxy-3-methylglutaryl-CoA: step 1/1. In terms of biological role, involved in the catabolism of branched amino acids such as leucine. This Arabidopsis thaliana (Mouse-ear cress) protein is Hydroxymethylglutaryl-CoA lyase, mitochondrial (HMGCL).